Consider the following 447-residue polypeptide: MPDVTVVGGGLAGSEAAWQAARAGCRVELWEMRPVKETPAHHTDLFAELVCSNSLGNRSPETASGLLKEELRRLGSVILRCADANAVPAGGALGVAREDFARAVTETVGSHPNIEVVRREARDIPEGPAVIATGPLTSDALHRKIEELSGETLYFFDAASPILHRDSIDDSVVYRASRYGRGEADYLNCPMDEETYYAFVEELASAELSPIKKFEEDMYFEGCLPVETIARRGPDTLRFGPMKPVGLPDPRTGREPFAVVQLRQDDAEGRLYNIVGFQTRLRWGEQKRVFRMIPGLQRAEFARFGVMHRNTYLPSNRMLEATMKIRNALSERPLFFAGQLTGVEGYVESTAMGYIAGTNAARVARGLEPIRWPEGTMMGALARYITTKEGTLQPINSNWGLVPAPPKRENGRRLGRQERRRRQAEMALGVLERFAGEVLRPPVAAGR.

FAD is bound at residue 8–13; the sequence is GGGLAG. The segment at 398-421 is disordered; it reads NWGLVPAPPKRENGRRLGRQERRR. Basic and acidic residues predominate over residues 406 to 417; the sequence is PKRENGRRLGRQ.

Belongs to the MnmG family. TrmFO subfamily. Requires FAD as cofactor.

The protein resides in the cytoplasm. The catalysed reaction is uridine(54) in tRNA + (6R)-5,10-methylene-5,6,7,8-tetrahydrofolate + NADH + H(+) = 5-methyluridine(54) in tRNA + (6S)-5,6,7,8-tetrahydrofolate + NAD(+). It carries out the reaction uridine(54) in tRNA + (6R)-5,10-methylene-5,6,7,8-tetrahydrofolate + NADPH + H(+) = 5-methyluridine(54) in tRNA + (6S)-5,6,7,8-tetrahydrofolate + NADP(+). Its function is as follows. Catalyzes the folate-dependent formation of 5-methyl-uridine at position 54 (M-5-U54) in all tRNAs. The sequence is that of Methylenetetrahydrofolate--tRNA-(uracil-5-)-methyltransferase TrmFO from Rubrobacter xylanophilus (strain DSM 9941 / JCM 11954 / NBRC 16129 / PRD-1).